Consider the following 388-residue polypeptide: MNLHEYQAKELLKSYGLPIQEGIIAYSGDEAAAAFDKTPTDIAVIKAQVHAGGRGKAGGVKLVKTREEAKQVTDELIGKNLVTYQTDAAGQPVNFVLVAEDMYPVQTELYLGAVVDRSSRRVTFMASTEGGVEIEKVAEETPEKIFKVNIDPLVGLLPFQAREVAFKLGLEGKQINQFVKLMSGAYQAFVENDIDLLEINPLAVRENGEIVCVDGKIGIDSNALYRLPKIAALQDKSQENERELKAAEFDLNYVALEGNIGCMVNGAGLAMATMDIIKLYGGKPANFLDVGGGATKDRVVEAFKIILEDSSVEGVLINIFGGIVRCDMIAEAIIAAIKEVDVKVPVVVRLEGNNAELGAQILEESGLKLISAQGLSDAAQKIVDAVKA.

The ATP-grasp domain occupies 9–245 (KELLKSYGLP…KSQENERELK (237 aa)). ATP-binding positions include lysine 46, 53–55 (GRG), glutamate 100, tyrosine 103, and glutamate 108. Residues asparagine 200 and aspartate 214 each contribute to the Mg(2+) site. Substrate-binding positions include asparagine 265 and 322-324 (GIV).

This sequence belongs to the succinate/malate CoA ligase beta subunit family. Heterotetramer of two alpha and two beta subunits. It depends on Mg(2+) as a cofactor.

It carries out the reaction succinate + ATP + CoA = succinyl-CoA + ADP + phosphate. It catalyses the reaction GTP + succinate + CoA = succinyl-CoA + GDP + phosphate. Its pathway is carbohydrate metabolism; tricarboxylic acid cycle; succinate from succinyl-CoA (ligase route): step 1/1. Succinyl-CoA synthetase functions in the citric acid cycle (TCA), coupling the hydrolysis of succinyl-CoA to the synthesis of either ATP or GTP and thus represents the only step of substrate-level phosphorylation in the TCA. The beta subunit provides nucleotide specificity of the enzyme and binds the substrate succinate, while the binding sites for coenzyme A and phosphate are found in the alpha subunit. The sequence is that of Succinate--CoA ligase [ADP-forming] subunit beta from Psychrobacter cryohalolentis (strain ATCC BAA-1226 / DSM 17306 / VKM B-2378 / K5).